Here is a 93-residue protein sequence, read N- to C-terminus: Cobalt transport protein CbiN (93 aa).

A run of 2 helical transmembrane segments spans residues 5-25 (LILL…NHGG) and 63-83 (LLFT…LGYA).

This sequence belongs to the CbiN family. As to quaternary structure, forms an energy-coupling factor (ECF) transporter complex composed of an ATP-binding protein (A component, CbiO), a transmembrane protein (T component, CbiQ) and 2 possible substrate-capture proteins (S components, CbiM and CbiN) of unknown stoichimetry.

It localises to the cell inner membrane. It functions in the pathway cofactor biosynthesis; adenosylcobalamin biosynthesis. Part of the energy-coupling factor (ECF) transporter complex CbiMNOQ involved in cobalt import. This chain is Cobalt transport protein CbiN, found in Klebsiella pneumoniae subsp. pneumoniae (strain ATCC 700721 / MGH 78578).